The primary structure comprises 440 residues: NADH-quinone oxidoreductase subunit D 1 (440 aa).

Belongs to the complex I 49 kDa subunit family. In terms of assembly, NDH-1 is composed of 14 different subunits. Subunits NuoB, C, D, E, F, and G constitute the peripheral sector of the complex.

The protein resides in the cell membrane. It carries out the reaction a quinone + NADH + 5 H(+)(in) = a quinol + NAD(+) + 4 H(+)(out). In terms of biological role, NDH-1 shuttles electrons from NADH, via FMN and iron-sulfur (Fe-S) centers, to quinones in the respiratory chain. The immediate electron acceptor for the enzyme in this species is believed to be a menaquinone. Couples the redox reaction to proton translocation (for every two electrons transferred, four hydrogen ions are translocated across the cytoplasmic membrane), and thus conserves the redox energy in a proton gradient. In Streptomyces griseus subsp. griseus (strain JCM 4626 / CBS 651.72 / NBRC 13350 / KCC S-0626 / ISP 5235), this protein is NADH-quinone oxidoreductase subunit D 1.